Consider the following 146-residue polypeptide: D-aminoacyl-tRNA deacylase (146 aa).

Positions 137 to 138 match the Gly-cisPro motif, important for rejection of L-amino acids motif; sequence GP.

Belongs to the DTD family. In terms of assembly, homodimer.

The protein resides in the cytoplasm. It catalyses the reaction glycyl-tRNA(Ala) + H2O = tRNA(Ala) + glycine + H(+). It carries out the reaction a D-aminoacyl-tRNA + H2O = a tRNA + a D-alpha-amino acid + H(+). Functionally, an aminoacyl-tRNA editing enzyme that deacylates mischarged D-aminoacyl-tRNAs. Also deacylates mischarged glycyl-tRNA(Ala), protecting cells against glycine mischarging by AlaRS. Acts via tRNA-based rather than protein-based catalysis; rejects L-amino acids rather than detecting D-amino acids in the active site. By recycling D-aminoacyl-tRNA to D-amino acids and free tRNA molecules, this enzyme counteracts the toxicity associated with the formation of D-aminoacyl-tRNA entities in vivo and helps enforce protein L-homochirality. The protein is D-aminoacyl-tRNA deacylase of Anoxybacillus flavithermus (strain DSM 21510 / WK1).